The following is a 506-amino-acid chain: Nostrin (506 aa).

One can recognise an F-BAR domain in the interval 1–260; it reads MRDPLTDCSY…AISKVDVEKD (260 aa). Phosphoserine is present on S114. Coiled-coil stretches lie at residues 160 to 230 and 305 to 334; these read SLTQ…LNQY and KLGR…ASSS. The REM-1 domain occupies 292 to 372; sequence PMDKERRKSL…SYKLSSVLAD (81 aa). A disordered region spans residues 413–435; the sequence is KAESKAPAGGQNNPSSSPSGSTV. Low complexity predominate over residues 419–435; sequence PAGGQNNPSSSPSGSTV. In terms of domain architecture, SH3 spans 438 to 497; that stretch reads ASKHLCKALYTFQARQDDELNLEKGDIVTVHEKKEEGWWFGSLKGKRGHFPAAYVEELPP. A Phosphoserine modification is found at S479.

As to quaternary structure, homotrimer. Interacts with NOS3, DNM2, WASL and CAV1. Interacts with DAB2. Interacts (via SH3 domain) with DNM2; this interaction allows the recruitment of NOS3 to dynamin-positive structures.

It localises to the cell membrane. It is found in the cytoplasmic vesicle. The protein localises to the cytoplasm. The protein resides in the cytoskeleton. Its subcellular location is the nucleus. Multivalent adapter protein which may decrease NOS3 activity by inducing its translocation away from the plasma membrane. In Mus musculus (Mouse), this protein is Nostrin.